Consider the following 248-residue polypeptide: Ribonuclease PH (248 aa).

Phosphate contacts are provided by residues arginine 93 and 131–133; that span reads GTR.

This sequence belongs to the RNase PH family. As to quaternary structure, homohexameric ring arranged as a trimer of dimers.

The catalysed reaction is tRNA(n+1) + phosphate = tRNA(n) + a ribonucleoside 5'-diphosphate. Functionally, phosphorolytic 3'-5' exoribonuclease that plays an important role in tRNA 3'-end maturation. Removes nucleotide residues following the 3'-CCA terminus of tRNAs; can also add nucleotides to the ends of RNA molecules by using nucleoside diphosphates as substrates, but this may not be physiologically important. Probably plays a role in initiation of 16S rRNA degradation (leading to ribosome degradation) during starvation. This chain is Ribonuclease PH, found in Bifidobacterium longum (strain NCC 2705).